We begin with the raw amino-acid sequence, 344 residues long: tRNA(Ile)-lysidine synthase (344 aa).

Position 43–48 (Ser-43–Ser-48) interacts with ATP.

The protein belongs to the tRNA(Ile)-lysidine synthase family.

Its subcellular location is the cytoplasm. It carries out the reaction cytidine(34) in tRNA(Ile2) + L-lysine + ATP = lysidine(34) in tRNA(Ile2) + AMP + diphosphate + H(+). Functionally, ligates lysine onto the cytidine present at position 34 of the AUA codon-specific tRNA(Ile) that contains the anticodon CAU, in an ATP-dependent manner. Cytidine is converted to lysidine, thus changing the amino acid specificity of the tRNA from methionine to isoleucine. This chain is tRNA(Ile)-lysidine synthase, found in Bordetella bronchiseptica (strain ATCC BAA-588 / NCTC 13252 / RB50) (Alcaligenes bronchisepticus).